The sequence spans 349 residues: Twinfilin-2 (349 aa).

ADF-H domains follow at residues 4-139 (QTGI…KHVS) and 177-313 (GLAF…DEVH). The segment at 324 to 349 (AKPKGPVGKRGQKRLIKGPGENGEDS) is disordered.

It belongs to the actin-binding proteins ADF family. Twinfilin subfamily. As to quaternary structure, interacts with G-actin; ADP-actin form and capping protein (CP).

It localises to the cytoplasm. It is found in the cytoskeleton. The protein localises to the perinuclear region. Functionally, actin-binding protein involved in motile and morphological processes. Inhibits actin polymerization, likely by sequestering G-actin. The polypeptide is Twinfilin-2 (TWF2) (Gallus gallus (Chicken)).